A 443-amino-acid polypeptide reads, in one-letter code: MSVLLFGASHRSAPVPVLEKLAIGEADQPKIIEHILQSPLVTEVMVLSTCNRVEVYAVVEAFHGGLTVIGEAIARHAGMGMNELTKYAYVRYSEAAVEHLFAVASGLDSMVVGEQQVLGQVRNAYATAESHQAVGRVLHELSQSALRVGKRVHSETGIDAAGASVVSVALNLADNKLDGLPGRTAAVVGAGSMGSLATAQLIRAGIDNLWVVNRSAERARRLAATAREAGVNAQAITLDNLDQALAQADVVVSCTGAVRPVISLADVHHALEGGRQLVFCDLGMPRDVDPTVAGLPGVVVVDMERIQREPTARAAANDAGAARQIVNDEVARYLTGERMAEVTPTVTALRQRAAEVVEAELLRLDGRLPGLAGAERDEVAKTVRRVVDKLLHAPTVRVKQLASAPGGDSYAEALRELFELDPHTVEAVATAGELPLATKELHE.

Substrate-binding positions include 49-52, S109, 114-116, and Q120; these read TCNR and EQQ. Residue C50 is the Nucleophile of the active site. 189 to 194 is a binding site for NADP(+); sequence GAGSMG.

This sequence belongs to the glutamyl-tRNA reductase family. Homodimer.

The catalysed reaction is (S)-4-amino-5-oxopentanoate + tRNA(Glu) + NADP(+) = L-glutamyl-tRNA(Glu) + NADPH + H(+). It participates in porphyrin-containing compound metabolism; protoporphyrin-IX biosynthesis; 5-aminolevulinate from L-glutamyl-tRNA(Glu): step 1/2. Catalyzes the NADPH-dependent reduction of glutamyl-tRNA(Glu) to glutamate 1-semialdehyde (GSA). The sequence is that of Glutamyl-tRNA reductase from Mycobacteroides abscessus (strain ATCC 19977 / DSM 44196 / CCUG 20993 / CIP 104536 / JCM 13569 / NCTC 13031 / TMC 1543 / L948) (Mycobacterium abscessus).